The chain runs to 226 residues: Ras-related protein RABA4a (226 aa).

At Thr2 the chain carries N-acetylthreonine. Residue 24–31 (GDSAVGKS) coordinates GTP. Residues 46-54 (SKATIGVEF) carry the Effector region motif. GTP is bound by residues 72–76 (DTAGQ), 130–133 (NKSD), and 160–161 (SA). Positions 189–226 (ASEDQENGNPGSLAGKKIDIVPGPGQVIPNKSNMCCNS) are disordered. The span at 217–226 (PNKSNMCCNS) shows a compositional bias: polar residues. Residues Cys223 and Cys224 are each lipidated (S-geranylgeranyl cysteine).

The protein belongs to the small GTPase superfamily. Rab family. Interacts with TCTP1.

Its subcellular location is the cell membrane. In terms of biological role, intracellular vesicle trafficking and protein transport. This Arabidopsis thaliana (Mouse-ear cress) protein is Ras-related protein RABA4a.